We begin with the raw amino-acid sequence, 168 residues long: Protein-export protein SecB (168 aa).

The tract at residues 1–20 (MTDETAANGENEAGRQSQSS) is disordered.

This sequence belongs to the SecB family. In terms of assembly, homotetramer, a dimer of dimers. One homotetramer interacts with 1 SecA dimer.

It localises to the cytoplasm. Its function is as follows. One of the proteins required for the normal export of preproteins out of the cell cytoplasm. It is a molecular chaperone that binds to a subset of precursor proteins, maintaining them in a translocation-competent state. It also specifically binds to its receptor SecA. This is Protein-export protein SecB from Rhodospirillum centenum (strain ATCC 51521 / SW).